A 156-amino-acid chain; its full sequence is Small ribosomal subunit protein uS7 (156 aa).

The protein belongs to the universal ribosomal protein uS7 family. In terms of assembly, part of the 30S ribosomal subunit. Contacts proteins S9 and S11.

Functionally, one of the primary rRNA binding proteins, it binds directly to 16S rRNA where it nucleates assembly of the head domain of the 30S subunit. Is located at the subunit interface close to the decoding center, probably blocks exit of the E-site tRNA. This Dichelobacter nodosus (strain VCS1703A) protein is Small ribosomal subunit protein uS7.